The chain runs to 836 residues: Transcription factor vrtR2 (836 aa).

The span at 1 to 26 (MPSLSSKTSTMQRSCRPQMSACPNQQ) shows a compositional bias: polar residues. Residues 1-29 (MPSLSSKTSTMQRSCRPQMSACPNQQQKD) form a disordered region. A DNA-binding region (zn(2)-C6 fungal-type) is located at residues 37–63 (CVLCRDRKLKCDKLDPCSNCTSSGVAC). Residues 72–114 (PRGRHARTVQTKASTPPDTRRRGSSNESTTAPAPDDGGLGTHI) are disordered. The segment covering 79 to 88 (TVQTKASTPP) has biased composition (polar residues).

It localises to the nucleus. Functionally, probable transcription factor that regulates expression of the gene cluster that mediates the biosynthesis of viridicatumtoxin, a tetracycline-like fungal meroterpenoid with a unique, fused spirobicyclic ring system. The chain is Transcription factor vrtR2 from Penicillium aethiopicum.